Reading from the N-terminus, the 38-residue chain is Photosystem II reaction center protein L (38 aa).

A helical membrane pass occupies residues 17 to 37 (SLYWGLLLIFVLAVPFSNYFF).

It belongs to the PsbL family. In terms of assembly, PSII is composed of 1 copy each of membrane proteins PsbA, PsbB, PsbC, PsbD, PsbE, PsbF, PsbH, PsbI, PsbJ, PsbK, PsbL, PsbM, PsbT, PsbX, PsbY, PsbZ, Psb30/Ycf12, at least 3 peripheral proteins of the oxygen-evolving complex and a large number of cofactors. It forms dimeric complexes.

The protein localises to the plastid. It is found in the chloroplast thylakoid membrane. In terms of biological role, one of the components of the core complex of photosystem II (PSII). PSII is a light-driven water:plastoquinone oxidoreductase that uses light energy to abstract electrons from H(2)O, generating O(2) and a proton gradient subsequently used for ATP formation. It consists of a core antenna complex that captures photons, and an electron transfer chain that converts photonic excitation into a charge separation. This subunit is found at the monomer-monomer interface and is required for correct PSII assembly and/or dimerization. The polypeptide is Photosystem II reaction center protein L (Cedrus deodara (Deodar cedar)).